A 146-amino-acid polypeptide reads, in one-letter code: Transcriptional regulator MraZ (146 aa).

SpoVT-AbrB domains are found at residues 5-47 (EYYH…TITD) and 76-119 (SIQV…AKEK).

This sequence belongs to the MraZ family. Forms oligomers.

Its subcellular location is the cytoplasm. It is found in the nucleoid. The protein is Transcriptional regulator MraZ of Dictyoglomus thermophilum (strain ATCC 35947 / DSM 3960 / H-6-12).